The following is a 255-amino-acid chain: Syntaxin-6 (255 aa).

Position 2 is an N-acetylserine (serine 2). The residue at position 2 (serine 2) is a Phosphoserine. The tract at residues 2–112 is interaction with BLTP3B; it reads SMEDPFFVVK…KDQMSASSVQ (111 aa). The interval 2 to 168 is required for interaction with VPS51; the sequence is SMEDPFFVVK…QAQQQLIVEQ (167 aa). Residues 2 to 234 lie on the Cytoplasmic side of the membrane; that stretch reads SMEDPFFVVK…VSHMTSDRRQ (233 aa). Residues 41–74 are a coiled coil; it reads EEIDWTTNELRNNLRSIEWDLEDLDETISIVEAN. Residues serine 129 and serine 152 each carry the phosphoserine modification. The 63-residue stretch at 163–225 folds into the t-SNARE coiled-coil homology domain; the sequence is QLIVEQQDEQ…DNVMKKLAKV (63 aa). Residues 235 to 255 traverse the membrane as a helical; Anchor for type IV membrane protein segment; it reads WCAIAILFAVLLVVLTLFLVL.

Belongs to the syntaxin family. Identified in a complex containing STX6, STX12, VAMP4 and VTI1A. Binds EEA1. Interacts with VPS45A and GOPC. Interacts with MARCHF2; the interaction promotes MARCHF2-mediated ubiquitination and degradation of CFTR. Interacts with MARCHF3. Interacts with BLTP3B (via C-terminal coiled-coil domain). Interacts with BAIAP3; this interaction is increased in the presence of calcium. Interacts (via N-terminus) with VPS51. Interacts with VPS13B. In terms of tissue distribution, widely expressed, with relatively higher expression in brain, lung and kidney.

The protein resides in the golgi apparatus membrane. The protein localises to the golgi apparatus. It is found in the trans-Golgi network membrane. Its subcellular location is the recycling endosome membrane. Its function is as follows. SNARE promoting movement of transport vesicles to target membranes. Targets endosomes to the trans-Golgi network, and may therefore function in retrograde trafficking. Together with SNARE STX12, promotes movement of vesicles from endosomes to the cell membrane, and may therefore function in the endocytic recycling pathway. This is Syntaxin-6 (Stx6) from Rattus norvegicus (Rat).